Reading from the N-terminus, the 179-residue chain is Large ribosomal subunit protein uL5 (179 aa).

This sequence belongs to the universal ribosomal protein uL5 family. In terms of assembly, part of the 50S ribosomal subunit; part of the 5S rRNA/L5/L18/L25 subcomplex. Contacts the 5S rRNA and the P site tRNA. Forms a bridge to the 30S subunit in the 70S ribosome.

Functionally, this is one of the proteins that bind and probably mediate the attachment of the 5S RNA into the large ribosomal subunit, where it forms part of the central protuberance. In the 70S ribosome it contacts protein S13 of the 30S subunit (bridge B1b), connecting the 2 subunits; this bridge is implicated in subunit movement. Contacts the P site tRNA; the 5S rRNA and some of its associated proteins might help stabilize positioning of ribosome-bound tRNAs. This Synechococcus sp. (strain CC9311) protein is Large ribosomal subunit protein uL5.